The chain runs to 706 residues: Elongation factor G (706 aa).

The region spanning 8-295 (ERYRNFGIMA…AVIDYLPSPL (288 aa)) is the tr-type G domain. Residues 17–24 (AHIDAGKT), 92–96 (DTPGH), and 146–149 (NKMD) contribute to the GTP site.

The protein belongs to the TRAFAC class translation factor GTPase superfamily. Classic translation factor GTPase family. EF-G/EF-2 subfamily.

It localises to the cytoplasm. Its function is as follows. Catalyzes the GTP-dependent ribosomal translocation step during translation elongation. During this step, the ribosome changes from the pre-translocational (PRE) to the post-translocational (POST) state as the newly formed A-site-bound peptidyl-tRNA and P-site-bound deacylated tRNA move to the P and E sites, respectively. Catalyzes the coordinated movement of the two tRNA molecules, the mRNA and conformational changes in the ribosome. This is Elongation factor G from Jannaschia sp. (strain CCS1).